Reading from the N-terminus, the 385-residue chain is 1-deoxy-D-xylulose 5-phosphate reductoisomerase (385 aa).

NADPH is bound by residues threonine 10, glycine 11, serine 12, isoleucine 13, glycine 36, asparagine 38, and asparagine 121. Residue lysine 122 coordinates 1-deoxy-D-xylulose 5-phosphate. Residue glutamate 123 participates in NADPH binding. Aspartate 147 contacts Mn(2+). 1-deoxy-D-xylulose 5-phosphate-binding residues include serine 148, glutamate 149, serine 173, and histidine 196. Glutamate 149 is a Mn(2+) binding site. Glycine 202 contacts NADPH. 1-deoxy-D-xylulose 5-phosphate contacts are provided by serine 209, asparagine 214, lysine 215, and glutamate 218. Glutamate 218 is a Mn(2+) binding site.

Belongs to the DXR family. Requires Mg(2+) as cofactor. Mn(2+) serves as cofactor.

The catalysed reaction is 2-C-methyl-D-erythritol 4-phosphate + NADP(+) = 1-deoxy-D-xylulose 5-phosphate + NADPH + H(+). Its pathway is isoprenoid biosynthesis; isopentenyl diphosphate biosynthesis via DXP pathway; isopentenyl diphosphate from 1-deoxy-D-xylulose 5-phosphate: step 1/6. Catalyzes the NADPH-dependent rearrangement and reduction of 1-deoxy-D-xylulose-5-phosphate (DXP) to 2-C-methyl-D-erythritol 4-phosphate (MEP). In Exiguobacterium sp. (strain ATCC BAA-1283 / AT1b), this protein is 1-deoxy-D-xylulose 5-phosphate reductoisomerase.